The following is a 336-amino-acid chain: tRNA (guanine(37)-N(1))-methyltransferase Trm5b (336 aa).

Residues R186, D223–I224, D251–V252, and N265 each bind S-adenosyl-L-methionine.

The protein belongs to the class I-like SAM-binding methyltransferase superfamily. TRM5/TYW2 family. Monomer.

The protein localises to the cytoplasm. It carries out the reaction guanosine(37) in tRNA + S-adenosyl-L-methionine = N(1)-methylguanosine(37) in tRNA + S-adenosyl-L-homocysteine + H(+). In terms of biological role, specifically methylates the N1 position of guanosine-37 in various tRNAs. This chain is tRNA (guanine(37)-N(1))-methyltransferase Trm5b (trm5b), found in Methanocaldococcus jannaschii (strain ATCC 43067 / DSM 2661 / JAL-1 / JCM 10045 / NBRC 100440) (Methanococcus jannaschii).